A 190-amino-acid polypeptide reads, in one-letter code: Recombination protein RecR (190 aa).

The C4-type zinc-finger motif lies at 58 to 73 (CTQCGGLSEDELCYIC). The Toprim domain maps to 81 to 167 (SSLCLVESAR…HFTKIAQGVP (87 aa)).

Belongs to the RecR family.

May play a role in DNA repair. It seems to be involved in an RecBC-independent recombinational process of DNA repair. It may act with RecF and RecO. In Nitratiruptor sp. (strain SB155-2), this protein is Recombination protein RecR.